The primary structure comprises 186 residues: Nicotinamide-nucleotide adenylyltransferase (186 aa).

Belongs to the archaeal NMN adenylyltransferase family.

It is found in the cytoplasm. It carries out the reaction beta-nicotinamide D-ribonucleotide + ATP + H(+) = diphosphate + NAD(+). It participates in cofactor biosynthesis; NAD(+) biosynthesis; NAD(+) from nicotinamide D-ribonucleotide: step 1/1. The protein is Nicotinamide-nucleotide adenylyltransferase of Pyrococcus horikoshii (strain ATCC 700860 / DSM 12428 / JCM 9974 / NBRC 100139 / OT-3).